Reading from the N-terminus, the 860-residue chain is Pentatricopeptide repeat-containing protein At1g18900 (860 aa).

8 PPR repeats span residues 363–397 (DGHTYTTMVGNLGRAKQFGAINKLLDEMVRDGCQP), 398–432 (NTVTYNRLIHSYGRANYLNEAMNVFNQMQEAGCKP), 433–467 (DRVTYCTLIDIHAKAGFLDIAMDMYQRMQAGGLSP), 468–502 (DTFTYSVIINCLGKAGHLPAAHKLFCEMVDQGCTP), 503–537 (NLVTYNIMMDLHAKARNYQNALKLYRDMQNAGFEP), 538–572 (DKVTYSIVMEVLGHCGYLEEAEAVFTEMQQKNWIP), 573–607 (DEPVYGLLVDLWGKAGNVEKAWQWYQAMLHAGLRP), and 608–642 (NVPTCNSLLSTFLRVNKIAEAYELLQNMLALGLRP). The 84-residue stretch at 760 to 843 (INLHVMSEGT…NSGCFVGSGE (84 aa)) folds into the Smr domain.

This sequence belongs to the PPR family. P subfamily.

The polypeptide is Pentatricopeptide repeat-containing protein At1g18900 (Arabidopsis thaliana (Mouse-ear cress)).